The chain runs to 654 residues: Interferon-induced GTP-binding protein Mx1 (654 aa).

M1 carries the post-translational modification N-acetylmethionine. Composition is skewed to basic and acidic residues over residues M1–D12 and D23–S32. The disordered stretch occupies residues M1 to K33. The 274-residue stretch at D62–P335 folds into the Dynamin-type G domain. Residues G72 to S79 are G1 motif. G72–S79 serves as a coordination point for GTP. Positions V97 to R99 are G2 motif. The segment at D173 to G176 is G3 motif. Residues D173–I177 and T242–D245 contribute to the GTP site. The G4 motif stretch occupies residues T242 to D245. Positions K274–G277 are G5 motif. Positions L336–E361 are bundle signaling element (BSE). The tract at residues E361–C528 is middle domain. Residues E362 to E624 are stalk. Residues E544–E563 form a disordered region. The critical for lipid-binding stretch occupies residues K549–K552. In terms of domain architecture, GED spans T566–G654.

The protein belongs to the TRAFAC class dynamin-like GTPase superfamily. Dynamin/Fzo/YdjA family. In terms of assembly, homooligomer. Oligomerizes into multimeric filamentous or ring-like structures by virtue of its stalk domain. Oligomerization is critical for GTPase activity, protein stability, and recognition of viral target structures. Interacts with TRPC1, TRPC3, TRPC4, TRPC5, TRPC6 and TRPC7. Interacts with HSPA5. Interacts with DDX39A and DDX39B. Interacts with TUBB/TUBB5. In terms of processing, ISGylated.

It localises to the cytoplasm. Its subcellular location is the endoplasmic reticulum membrane. The protein localises to the perinuclear region. Interferon-induced dynamin-like GTPase with antiviral activity. This Ovis aries (Sheep) protein is Interferon-induced GTP-binding protein Mx1 (MX1).